The primary structure comprises 33 residues: Potassium channel toxin alpha-KTx 10.5 (33 aa).

Cystine bridges form between cysteine 4-cysteine 23, cysteine 9-cysteine 28, and cysteine 13-cysteine 30.

In terms of tissue distribution, expressed by the venom gland.

The protein localises to the secreted. In terms of biological role, inhibits less than 5% of human voltage-gated potassium (Kv) channel Kv1.3/KCNA3 currents at 100nM concentration and does not block human Kv1.1/KCNA1 and Kv1.2/KCNA2 currents. This Centruroides bonito (Scorpion) protein is Potassium channel toxin alpha-KTx 10.5.